Reading from the N-terminus, the 87-residue chain is Kappa-4-bungarotoxin (87 aa).

The signal sequence occupies residues 1–21; that stretch reads MKTLLLTLVVVTIVCLDLGYT. Cystine bridges form between C24/C42, C35/C63, C48/C52, C67/C79, and C80/C85.

The protein belongs to the three-finger toxin family. Long-chain subfamily. Kappa-neurotoxin sub-subfamily. As to quaternary structure, homo- and heterodimer; non-covalently linked. As to expression, expressed by the venom gland.

It is found in the secreted. Its function is as follows. Postsynaptic neurotoxin that binds and inhibits neuronal nicotinic acetylcholine receptors (nAChR) with high affinity (IC(50)&lt;100 nM). Is a selective, and slowly reversible antagonist of alpha-3/CHRNA3-containing and some alpha-4/CHRNA4-containing AChRs. The sequence is that of Kappa-4-bungarotoxin from Bungarus multicinctus (Many-banded krait).